The following is a 373-amino-acid chain: Eukaryotic translation initiation factor 3 subunit M (373 aa).

The residue at position 2 (S2) is an N-acetylserine. 2 positions are modified to phosphoserine: S2 and S152. Positions 180–338 (AASKVMVELL…RKVVVSHSTH (159 aa)) constitute a PCI domain. Residue K253 is modified to N6-acetyllysine. S366 carries the phosphoserine modification.

This sequence belongs to the eIF-3 subunit M family. Component of the eukaryotic translation initiation factor 3 (eIF-3) complex, which is composed of 13 subunits: EIF3A, EIF3B, EIF3C, EIF3D, EIF3E, EIF3F, EIF3G, EIF3H, EIF3I, EIF3J, EIF3K, EIF3L and EIF3M. The eIF-3 complex appears to include 3 stable modules: module A is composed of EIF3A, EIF3B, EIF3G and EIF3I; module B is composed of EIF3F, EIF3H, and EIF3M; and module C is composed of EIF3C, EIF3D, EIF3E, EIF3K and EIF3L. EIF3C of module C binds EIF3B of module A and EIF3H of module B, thereby linking the three modules. EIF3J is a labile subunit that binds to the eIF-3 complex via EIF3B. The eIF-3 complex interacts with RPS6KB1 under conditions of nutrient depletion. Mitogenic stimulation leads to binding and activation of a complex composed of MTOR and RPTOR, leading to phosphorylation and release of RPS6KB1 and binding of EIF4B to eIF-3.

The protein localises to the cytoplasm. In terms of biological role, component of the eukaryotic translation initiation factor 3 (eIF-3) complex, which is required for several steps in the initiation of protein synthesis. The eIF-3 complex associates with the 40S ribosome and facilitates the recruitment of eIF-1, eIF-1A, eIF-2:GTP:methionyl-tRNAi and eIF-5 to form the 43S pre-initiation complex (43S PIC). The eIF-3 complex stimulates mRNA recruitment to the 43S PIC and scanning of the mRNA for AUG recognition. The eIF-3 complex is also required for disassembly and recycling of post-termination ribosomal complexes and subsequently prevents premature joining of the 40S and 60S ribosomal subunits prior to initiation. The eIF-3 complex specifically targets and initiates translation of a subset of mRNAs involved in cell proliferation, including cell cycling, differentiation and apoptosis, and uses different modes of RNA stem-loop binding to exert either translational activation or repression. This chain is Eukaryotic translation initiation factor 3 subunit M, found in Bos taurus (Bovine).